A 305-amino-acid polypeptide reads, in one-letter code: rRNA 2'-O-methyltransferase fibrillarin (305 aa).

The segment at methionine 1–glycine 70 is disordered. Residues serine 7 to glycine 69 are compositionally biased toward gly residues. 2 positions are modified to phosphoserine: serine 111 and serine 114. Residues threonine 160–serine 161, glutamate 179–phenylalanine 180, aspartate 204–alanine 205, and aspartate 224–glutamine 227 each bind S-adenosyl-L-methionine.

The protein belongs to the methyltransferase superfamily. Fibrillarin family. Component of box C/D small nucleolar ribonucleoprotein (snoRNP) particles. In terms of processing, by homology to other fibrillarins, some or all of the N-terminal domain arginines are modified to asymmetric dimethylarginine (DMA).

The protein resides in the nucleus. The protein localises to the nucleolus. It carries out the reaction L-glutaminyl-[histone H2A] + S-adenosyl-L-methionine = N(5)-methyl-L-glutaminyl-[histone H2A] + S-adenosyl-L-homocysteine + H(+). S-adenosyl-L-methionine-dependent methyltransferase that has the ability to methylate both RNAs and proteins. Involved in pre-rRNA processing by catalyzing the site-specific 2'-hydroxyl methylation of ribose moieties in pre-ribosomal RNA. Site specificity is provided by a guide RNA that base pairs with the substrate. Methylation occurs at a characteristic distance from the sequence involved in base pairing with the guide RNA. Also acts as a protein methyltransferase by mediating methylation of 'Gln-105' of histone H2A (H2AQ105me), a modification that impairs binding of the FACT complex and is specifically present at 35S ribosomal DNA locus. The protein is rRNA 2'-O-methyltransferase fibrillarin (fib1) of Schizosaccharomyces pombe (strain 972 / ATCC 24843) (Fission yeast).